A 355-amino-acid chain; its full sequence is Phospho-N-acetylmuramoyl-pentapeptide-transferase (355 aa).

Helical transmembrane passes span G3 to I23, V56 to F76, G80 to I100, A120 to L140, T152 to T172, L185 to F205, P224 to W244, I251 to V271, L276 to V296, and F330 to L350.

The protein belongs to the glycosyltransferase 4 family. MraY subfamily. Requires Mg(2+) as cofactor.

It is found in the cell membrane. The enzyme catalyses UDP-N-acetyl-alpha-D-muramoyl-L-alanyl-gamma-D-glutamyl-meso-2,6-diaminopimeloyl-D-alanyl-D-alanine + di-trans,octa-cis-undecaprenyl phosphate = di-trans,octa-cis-undecaprenyl diphospho-N-acetyl-alpha-D-muramoyl-L-alanyl-D-glutamyl-meso-2,6-diaminopimeloyl-D-alanyl-D-alanine + UMP. Its pathway is cell wall biogenesis; peptidoglycan biosynthesis. Its function is as follows. Catalyzes the initial step of the lipid cycle reactions in the biosynthesis of the cell wall peptidoglycan: transfers peptidoglycan precursor phospho-MurNAc-pentapeptide from UDP-MurNAc-pentapeptide onto the lipid carrier undecaprenyl phosphate, yielding undecaprenyl-pyrophosphoryl-MurNAc-pentapeptide, known as lipid I. The polypeptide is Phospho-N-acetylmuramoyl-pentapeptide-transferase (Frankia alni (strain DSM 45986 / CECT 9034 / ACN14a)).